The chain runs to 735 residues: Transcription factor RFX4 (735 aa).

The interval 27–59 is disordered; the sequence is NKRYSSHTSLGNVSNDENEEKENNRASKPHSTP. Residues 32–41 show a composition bias toward polar residues; that stretch reads SHTSLGNVSN. The DNA-binding element occupies 44 to 126; the sequence is NEEKENNRAS…RRLGTRGQSK (83 aa). Positions 61–136 form a DNA-binding region, RFX-type winged-helix; it reads TLQWLEENYE…YHYYGIAVKE (76 aa). The segment at 315–487 is necessary for dimerization; the sequence is RFSQILRRQT…NELMRAMKGE (173 aa). The tract at residues 501–538 is disordered; the sequence is EATPPTPSPGPSFSPAKSATSVEVPPPSSPVSNPSPEY.

The protein belongs to the RFX family. Homodimer. Heterodimer with RFX2 and RFX3. Binds DNA. Interacts with GPS2. In terms of tissue distribution, isoform 1: Brain-specific. Isoform 2: Testis-specific. Isoform 1: Highly expressed in the suprachiasmatic nucleus, the central pacemaker site of the circadian clock (at protein level).

The protein resides in the nucleus. Transcription factor that plays a role in early brain development. May activate transcription by interacting directly with the X-box. May activate transcription from CX3CL1 promoter through the X-box during brain development. May be required for neural tube ciliogenesis during embryogenesis. This Mus musculus (Mouse) protein is Transcription factor RFX4 (Rfx4).